Consider the following 55-residue polypeptide: Spermatid nuclear transition protein 1 (55 aa).

The span at 1–42 (MSTSRKLKSHGMRRGKNRAPHKGVKRGGSKRKYRKGSLKSRK) shows a compositional bias: basic residues. The disordered stretch occupies residues 1-55 (MSTSRKLKSHGMRRGKNRAPHKGVKRGGSKRKYRKGSLKSRKRCDDANRNYRSHL). Residues serine 9, serine 37, and serine 40 each carry the phosphoserine modification.

It belongs to the nuclear transition protein 1 family. In terms of tissue distribution, testis.

The protein resides in the nucleus. It is found in the chromosome. Plays a key role in the replacement of histones to protamine in the elongating spermatids of mammals. In condensing spermatids, loaded onto the nucleosomes, where it promotes the recruitment and processing of protamines, which are responsible for histone eviction. The sequence is that of Spermatid nuclear transition protein 1 (TNP1) from Sus scrofa (Pig).